The chain runs to 359 residues: Popy class I histocompatibility antigen, alpha chain E (359 aa).

The first 18 residues, 1–18 (GTLLLLLSEALALTETWA), serve as a signal peptide directing secretion. The interval 19–108 (GSHSLKYFHT…LRGYYNQTEA (90 aa)) is alpha-1. The Extracellular segment spans residues 19–302 (GSHSLKYFHT…EPASQTTIPI (284 aa)). The N-linked (GlcNAc...) asparagine glycan is linked to N104. Positions 109–200 (GSHTLQWMHG…EKGKETLLHL (92 aa)) are alpha-2. 2 disulfide bridges follow: C119–C182 and C221–C277. The interval 201–292 (DPPKTHVTHH…GLPEPLTLRW (92 aa)) is alpha-3. Residues 203 to 291 (PKTHVTHHRI…EGLPEPLTLR (89 aa)) form the Ig-like C1-type domain. Positions 293–302 (EPASQTTIPI) are connecting peptide. Residues 303–326 (VGIFAGLVLLGAVVTGATVVAAVM) traverse the membrane as a helical segment. At 327–359 (WRKKSSGGKGGSYSKAEWSDSAQGSESLTACKA) the chain is on the cytoplasmic side. The interval 330-359 (KSSGGKGGSYSKAEWSDSAQGSESLTACKA) is disordered. Polar residues predominate over residues 346 to 359 (DSAQGSESLTACKA). A Phosphoserine modification is found at S351.

It belongs to the MHC class I family. In terms of assembly, heterodimer of an alpha chain and a beta chain (beta-2-microglobulin).

It localises to the membrane. Functionally, involved in the presentation of foreign antigens to the immune system. The sequence is that of Popy class I histocompatibility antigen, alpha chain E (Popy-E) from Pongo pygmaeus (Bornean orangutan).